A 328-amino-acid polypeptide reads, in one-letter code: DNA-directed RNA polymerase subunit alpha (328 aa).

Residues 1-232 (MSTQGFLKPR…DQISVFAALE (232 aa)) form an alpha N-terminal domain (alpha-NTD) region. An alpha C-terminal domain (alpha-CTD) region spans residues 248-328 (IDPVLLRPVD…NWPPLGLERP (81 aa)).

This sequence belongs to the RNA polymerase alpha chain family. As to quaternary structure, homodimer. The RNAP catalytic core consists of 2 alpha, 1 beta, 1 beta' and 1 omega subunit. When a sigma factor is associated with the core the holoenzyme is formed, which can initiate transcription.

The enzyme catalyses RNA(n) + a ribonucleoside 5'-triphosphate = RNA(n+1) + diphosphate. DNA-dependent RNA polymerase catalyzes the transcription of DNA into RNA using the four ribonucleoside triphosphates as substrates. This Bordetella petrii (strain ATCC BAA-461 / DSM 12804 / CCUG 43448) protein is DNA-directed RNA polymerase subunit alpha.